The primary structure comprises 666 residues: MSSPFVPIITADIDWRDDLPYSLQFDDIYYSAEGGINQSLYVFVEGNNLINRWQQLPTNESNVFTIAETGFGTGMNFLLTWKLWEKFAPQNARLHYISCDKHPLKKNDLIKCLQKWPELSVQAEKLIAHYPVLTPGYHHLTFSNNQITLTLMLGDVLECYEQLLFCGDINLEHQLRESYVNAWYLDGFSPSKNQSMWSDNLFTVIAMLSKESTTVATYSASSIVKTALTNAGFVIEKRKGFGPKRHMICAHYEKAYSSSKKNRHTPWHINYPVTKDERTALIVGGGLAGCFIANSLAKRGWEVTILEEKEKVGCGGSANQQAVLFPKLSTYKSPFTQFMLYSFLYANDVYKELLKYYDLGELKGSLLLAHNEKEKANQQSLIHWLELYPELGQLVDEKQSSELSGISLPCGGLFIPSSGWINSPELCDILIDNKRISLITGNRVQSINYNQKNWVVNGIEASVLILANGQQVNYFHETNHLPVKAIRGQMTTIQSTQESTKLKIPLCAEGHVLPALNNSHKVGASYDIGTSEPELNALDDQLNLARLKRIAPDIMWSQNVLDHWAGIRAASPDYLPIVGPLPNALEFKEIYSELKSNSKRWIAEAAPCYPNLYVCAAFGSRGLTTIPLATEWLAGLINKEISILPRKLIQAISPARFLRKKIIQGP.

The tract at residues 1–253 (MSSPFVPIIT…KRHMICAHYE (253 aa)) is tRNA (mnm(5)s(2)U34)-methyltransferase. An FAD-dependent cmnm(5)s(2)U34 oxidoreductase region spans residues 283–666 (VGGGLAGCFI…FLRKKIIQGP (384 aa)).

The protein in the N-terminal section; belongs to the methyltransferase superfamily. tRNA (mnm(5)s(2)U34)-methyltransferase family. In the C-terminal section; belongs to the DAO family. FAD serves as cofactor.

It localises to the cytoplasm. The catalysed reaction is 5-aminomethyl-2-thiouridine(34) in tRNA + S-adenosyl-L-methionine = 5-methylaminomethyl-2-thiouridine(34) in tRNA + S-adenosyl-L-homocysteine + H(+). In terms of biological role, catalyzes the last two steps in the biosynthesis of 5-methylaminomethyl-2-thiouridine (mnm(5)s(2)U) at the wobble position (U34) in tRNA. Catalyzes the FAD-dependent demodification of cmnm(5)s(2)U34 to nm(5)s(2)U34, followed by the transfer of a methyl group from S-adenosyl-L-methionine to nm(5)s(2)U34, to form mnm(5)s(2)U34. This Legionella pneumophila subsp. pneumophila (strain Philadelphia 1 / ATCC 33152 / DSM 7513) protein is tRNA 5-methylaminomethyl-2-thiouridine biosynthesis bifunctional protein MnmC.